The sequence spans 518 residues: Sensor protein kinase HptS (518 aa).

Helical transmembrane passes span 20–40 (IFPVFLVIIIGLVSFYAIYIW) and 222–242 (GITLLIVMAVVLVLLVIFGFI). Residues 297–513 (EQLIHSIEHT…LICYKIPLSR (217 aa)) enclose the Histidine kinase domain. His325 is modified (phosphohistidine; by autocatalysis).

In terms of processing, autophosphorylated.

The protein resides in the cell membrane. It catalyses the reaction ATP + protein L-histidine = ADP + protein N-phospho-L-histidine.. Its function is as follows. Member of the two-component regulatory system HptS/HptR that regulates genes involved in hexose phosphate transport system in response to changes in extracellular phosphate sources. May act as a sensor protein kinase which is autophosphorylated at a histidine residue and transfers its phosphate group to the conserved aspartic acid residue in the regulatory domain of HptS. In turn, HptS antagonizes CcpA-dependent transcription of a subset of CcpA-regulated genes involved in antibiotic susceptibility. This is Sensor protein kinase HptS (hptS) from Staphylococcus aureus (strain bovine RF122 / ET3-1).